The chain runs to 434 residues: Nicotinate phosphoribosyltransferase (434 aa).

His242 carries the post-translational modification Phosphohistidine; by autocatalysis.

It belongs to the NAPRTase family. Post-translationally, transiently phosphorylated on a His residue during the reaction cycle. Phosphorylation strongly increases the affinity for substrates and increases the rate of nicotinate D-ribonucleotide production. Dephosphorylation regenerates the low-affinity form of the enzyme, leading to product release.

The catalysed reaction is nicotinate + 5-phospho-alpha-D-ribose 1-diphosphate + ATP + H2O = nicotinate beta-D-ribonucleotide + ADP + phosphate + diphosphate. The protein operates within cofactor biosynthesis; NAD(+) biosynthesis; nicotinate D-ribonucleotide from nicotinate: step 1/1. Catalyzes the synthesis of beta-nicotinate D-ribonucleotide from nicotinate and 5-phospho-D-ribose 1-phosphate at the expense of ATP. This Rhizobium etli (strain CIAT 652) protein is Nicotinate phosphoribosyltransferase.